A 206-amino-acid chain; its full sequence is 2,3-bisphosphoglycerate-dependent phosphoglycerate mutase (206 aa).

Residues 9-16 (RHGQSEWN), 22-23 (TG), Arg-61, 88-91 (ERDY), Lys-99, 115-116 (RR), and 159-160 (GN) contribute to the substrate site. Residue His-10 is the Tele-phosphohistidine intermediate of the active site. The active-site Proton donor/acceptor is the Glu-88.

The protein belongs to the phosphoglycerate mutase family. BPG-dependent PGAM subfamily. Homodimer.

The enzyme catalyses (2R)-2-phosphoglycerate = (2R)-3-phosphoglycerate. The protein operates within carbohydrate degradation; glycolysis; pyruvate from D-glyceraldehyde 3-phosphate: step 3/5. Catalyzes the interconversion of 2-phosphoglycerate and 3-phosphoglycerate. The protein is 2,3-bisphosphoglycerate-dependent phosphoglycerate mutase of Brucella ovis (strain ATCC 25840 / 63/290 / NCTC 10512).